The chain runs to 67 residues: Large ribosomal subunit protein uL29 (67 aa).

It belongs to the universal ribosomal protein uL29 family.

The chain is Large ribosomal subunit protein uL29 from Clostridioides difficile (strain 630) (Peptoclostridium difficile).